The following is a 156-amino-acid chain: ATP synthase subunit b (156 aa).

A helical transmembrane segment spans residues 7 to 29 (LFAQMVVFLVLAWFTMKFVWPPL).

The protein belongs to the ATPase B chain family. In terms of assembly, F-type ATPases have 2 components, F(1) - the catalytic core - and F(0) - the membrane proton channel. F(1) has five subunits: alpha(3), beta(3), gamma(1), delta(1), epsilon(1). F(0) has three main subunits: a(1), b(2) and c(10-14). The alpha and beta chains form an alternating ring which encloses part of the gamma chain. F(1) is attached to F(0) by a central stalk formed by the gamma and epsilon chains, while a peripheral stalk is formed by the delta and b chains.

It localises to the cell inner membrane. Functionally, f(1)F(0) ATP synthase produces ATP from ADP in the presence of a proton or sodium gradient. F-type ATPases consist of two structural domains, F(1) containing the extramembraneous catalytic core and F(0) containing the membrane proton channel, linked together by a central stalk and a peripheral stalk. During catalysis, ATP synthesis in the catalytic domain of F(1) is coupled via a rotary mechanism of the central stalk subunits to proton translocation. In terms of biological role, component of the F(0) channel, it forms part of the peripheral stalk, linking F(1) to F(0). This chain is ATP synthase subunit b, found in Burkholderia vietnamiensis (strain G4 / LMG 22486) (Burkholderia cepacia (strain R1808)).